Consider the following 115-residue polypeptide: Parathyroid hormone (115 aa).

A signal peptide spans 1-25; it reads MMSAKDTVKVMVVMLAICFLARSDG. Positions 26–31 are excised as a propeptide; it reads KPIKKR. The segment at 51–69 is important for receptor binding; that stretch reads RVEWLRKKLQDVHNFVALG. Positions 75–98 are disordered; sequence RDGGSQRPRKKEDNVLVESHQKSL.

Belongs to the parathyroid hormone family. As to quaternary structure, interacts with PTH1R (via N-terminal extracellular domain).

It localises to the secreted. Parathyroid hormone elevates calcium level by dissolving the salts in bone and preventing their renal excretion. Acts by binding to its receptor, PTH1R, activating G protein-coupled receptor signaling. Stimulates [1-14C]-2-deoxy-D-glucose (2DG) transport and glycogen synthesis in osteoblastic cells. The protein is Parathyroid hormone (PTH) of Sus scrofa (Pig).